Here is a 397-residue protein sequence, read N- to C-terminus: MFHRIEEALEDLKQGKVVIVCDDENRENEGDFIALAEYITPETINFMITHGRGLVCVPITEGYAERLQLEPMVSHNTDSHHTAFTVSIDHVSTTTGISAHERATTIQELLNPASKGTDFNRPGHIFPLIAKEGGVLRRAGHTEAAVDLAKLCGAEPAGVICEIINEDGTMARVPDLIECAKQFDIKMITIEDLIAYRRHHETLVTREVEITLPTDFGTFHAIGYSNSLDTKEHIALVKGDISIGEPVLVRVHSECLTGDVFGSHRCDCGPQLHAALAQIEREGKGVLLYMRQEGRGIGLLNKLRAYKLQEEGFDTVEANEKLGFPADLRDYGIGAQILKDLGLQSLRLLTNNPRKIAGLQGYDLEVVERVPLQMPAKEENKSYLQTKVNKLGHLLNL.

The segment at 1–199 (MFHRIEEALE…IEDLIAYRRH (199 aa)) is DHBP synthase. Residues 26–27 (RE), Asp-31, 138–142 (RAGHT), and Glu-162 each bind D-ribulose 5-phosphate. Residue Glu-27 participates in Mg(2+) binding. His-141 lines the Mg(2+) pocket. A GTP cyclohydrolase II region spans residues 200 to 397 (HETLVTREVE…VNKLGHLLNL (198 aa)). 250–254 (RVHSE) is a binding site for GTP. Zn(2+) contacts are provided by Cys-255, Cys-266, and Cys-268. Residues Gln-271, 293 to 295 (EGR), and Thr-315 each bind GTP. Asp-327 functions as the Proton acceptor; for GTP cyclohydrolase activity in the catalytic mechanism. The active-site Nucleophile; for GTP cyclohydrolase activity is the Arg-329. GTP is bound by residues Thr-350 and Lys-355.

This sequence in the N-terminal section; belongs to the DHBP synthase family. The protein in the C-terminal section; belongs to the GTP cyclohydrolase II family. Mg(2+) is required as a cofactor. Mn(2+) serves as cofactor. The cofactor is Zn(2+).

The enzyme catalyses D-ribulose 5-phosphate = (2S)-2-hydroxy-3-oxobutyl phosphate + formate + H(+). The catalysed reaction is GTP + 4 H2O = 2,5-diamino-6-hydroxy-4-(5-phosphoribosylamino)-pyrimidine + formate + 2 phosphate + 3 H(+). The protein operates within cofactor biosynthesis; riboflavin biosynthesis; 2-hydroxy-3-oxobutyl phosphate from D-ribulose 5-phosphate: step 1/1. It functions in the pathway cofactor biosynthesis; riboflavin biosynthesis; 5-amino-6-(D-ribitylamino)uracil from GTP: step 1/4. Its function is as follows. Catalyzes the conversion of D-ribulose 5-phosphate to formate and 3,4-dihydroxy-2-butanone 4-phosphate. Catalyzes the conversion of GTP to 2,5-diamino-6-ribosylamino-4(3H)-pyrimidinone 5'-phosphate (DARP), formate and pyrophosphate. This chain is Riboflavin biosynthesis protein RibBA, found in Bacillus cereus (strain G9842).